The chain runs to 292 residues: 1D-myo-inositol 2-acetamido-2-deoxy-alpha-D-glucopyranoside deacetylase (292 aa).

Positions 12, 15, and 147 each coordinate Zn(2+).

This sequence belongs to the MshB deacetylase family. Requires Zn(2+) as cofactor.

The enzyme catalyses 1D-myo-inositol 2-acetamido-2-deoxy-alpha-D-glucopyranoside + H2O = 1D-myo-inositol 2-amino-2-deoxy-alpha-D-glucopyranoside + acetate. Catalyzes the deacetylation of 1D-myo-inositol 2-acetamido-2-deoxy-alpha-D-glucopyranoside (GlcNAc-Ins) in the mycothiol biosynthesis pathway. The sequence is that of 1D-myo-inositol 2-acetamido-2-deoxy-alpha-D-glucopyranoside deacetylase from Rhodococcus jostii (strain RHA1).